Reading from the N-terminus, the 231-residue chain is Flagellar L-ring protein (231 aa).

The N-terminal stretch at 1–18 (MNRLLSVFALGGAVLLAG) is a signal peptide. C19 is lipidated: N-palmitoyl cysteine. C19 is lipidated: S-diacylglycerol cysteine.

This sequence belongs to the FlgH family. As to quaternary structure, the basal body constitutes a major portion of the flagellar organelle and consists of four rings (L,P,S, and M) mounted on a central rod.

It is found in the cell outer membrane. The protein resides in the bacterial flagellum basal body. Functionally, assembles around the rod to form the L-ring and probably protects the motor/basal body from shearing forces during rotation. This chain is Flagellar L-ring protein, found in Pseudomonas putida (strain GB-1).